The chain runs to 251 residues: MTEALYFLDCYLKEFEATVEKVTEGKYIVLDRTAFYPESGGQPSDTGKLVRERDGAEFKVVYAGKFNGDISHEISPEGETGAEGLKVGDKVKGIIDWDRRYRHMRMHTATHVIANVIEKEAGAQITGNQLGLDQSRVDFSLEAFDREKFAEYEKIANEIIAENHSVNLYLVSRKEAEERLSRLTTLAKGFSEEITEVRLVEIEGVTIEACGGSHLKNTGEIKGIKIEKLQNKGKSNRRMYFSLLDQASGLK.

Positions 107, 111, 210, and 214 each coordinate Zn(2+).

Belongs to the class-II aminoacyl-tRNA synthetase family. Editing domain AlaX-M subfamily. Requires Zn(2+) as cofactor.

It is found in the cytoplasm. Functionally, functions in trans to edit the amino acid moiety from mischarged Ser-tRNA(Ala). Recognition depends, at least in part, on the acceptor stem of tRNA(Ala). The protein is Alanyl-tRNA editing protein AlaX-M (alaXM) of Methanosarcina mazei (strain ATCC BAA-159 / DSM 3647 / Goe1 / Go1 / JCM 11833 / OCM 88) (Methanosarcina frisia).